Consider the following 199-residue polypeptide: Imidazoleglycerol-phosphate dehydratase (199 aa).

It belongs to the imidazoleglycerol-phosphate dehydratase family.

Its subcellular location is the cytoplasm. It catalyses the reaction D-erythro-1-(imidazol-4-yl)glycerol 3-phosphate = 3-(imidazol-4-yl)-2-oxopropyl phosphate + H2O. It functions in the pathway amino-acid biosynthesis; L-histidine biosynthesis; L-histidine from 5-phospho-alpha-D-ribose 1-diphosphate: step 6/9. This Roseiflexus sp. (strain RS-1) protein is Imidazoleglycerol-phosphate dehydratase.